A 270-amino-acid polypeptide reads, in one-letter code: S-methyl-5'-thioadenosine phosphorylase (270 aa).

Phosphate contacts are provided by residues Ser-16, 58–59 (RH), and 91–92 (SA). 3 disulfides stabilise this stretch: Cys-138-Cys-205, Cys-200-Cys-262, and Cys-259-Cys-261. Met-190 contributes to the substrate binding site. Thr-191 contributes to the phosphate binding site. 214–216 (DYD) provides a ligand contact to substrate.

The protein belongs to the PNP/MTAP phosphorylase family. MTAP subfamily. Homohexamer. Dimer of a homotrimer.

The catalysed reaction is S-methyl-5'-thioadenosine + phosphate = 5-(methylsulfanyl)-alpha-D-ribose 1-phosphate + adenine. It participates in amino-acid biosynthesis; L-methionine biosynthesis via salvage pathway; S-methyl-5-thio-alpha-D-ribose 1-phosphate from S-methyl-5'-thioadenosine (phosphorylase route): step 1/1. Functionally, catalyzes the reversible phosphorylation of S-methyl-5'-thioadenosine (MTA) to adenine and 5-methylthioribose-1-phosphate. Involved in the breakdown of MTA, a major by-product of polyamine biosynthesis. Responsible for the first step in the methionine salvage pathway after MTA has been generated from S-adenosylmethionine. Has broad substrate specificity with 6-aminopurine nucleosides as preferred substrates. This Saccharolobus solfataricus (strain ATCC 35092 / DSM 1617 / JCM 11322 / P2) (Sulfolobus solfataricus) protein is S-methyl-5'-thioadenosine phosphorylase.